The chain runs to 41 residues: Photosystem I reaction center subunit IX (41 aa).

A helical transmembrane segment spans residues 7–27 (YLSTVPVVFAIWLTFTAGLII).

The protein belongs to the PsaJ family.

Its subcellular location is the plastid. It localises to the chloroplast thylakoid membrane. In terms of biological role, may help in the organization of the PsaE and PsaF subunits. The protein is Photosystem I reaction center subunit IX of Bigelowiella natans (Pedinomonas minutissima).